A 450-amino-acid chain; its full sequence is Tubulin alpha chain (450 aa).

Gln-11 provides a ligand contact to GTP. Lys-40 is subject to N6-acetyllysine. Positions 71, 140, 144, 145, 179, 206, and 228 each coordinate GTP. Glu-71 contributes to the Mg(2+) binding site. Glu-254 is an active-site residue.

The protein belongs to the tubulin family. As to quaternary structure, dimer of alpha and beta chains. A typical microtubule is a hollow water-filled tube with an outer diameter of 25 nm and an inner diameter of 15 nM. Alpha-beta heterodimers associate head-to-tail to form protofilaments running lengthwise along the microtubule wall with the beta-tubulin subunit facing the microtubule plus end conferring a structural polarity. Microtubules usually have 13 protofilaments but different protofilament numbers can be found in some organisms and specialized cells. Mg(2+) is required as a cofactor. Post-translationally, acetylation of alpha chains at Lys-40 stabilizes microtubules and affects affinity and processivity of microtubule motors. This modification has a role in multiple cellular functions, ranging from cell motility, cell cycle progression or cell differentiation to intracellular trafficking and signaling.

It localises to the cytoplasm. The protein localises to the cytoskeleton. The enzyme catalyses GTP + H2O = GDP + phosphate + H(+). In terms of biological role, tubulin is the major constituent of microtubules, a cylinder consisting of laterally associated linear protofilaments composed of alpha- and beta-tubulin heterodimers. Microtubules grow by the addition of GTP-tubulin dimers to the microtubule end, where a stabilizing cap forms. Below the cap, tubulin dimers are in GDP-bound state, owing to GTPase activity of alpha-tubulin. The polypeptide is Tubulin alpha chain (Oxytricha granulifera (Ciliate)).